Here is a 135-residue protein sequence, read N- to C-terminus: ATP synthase epsilon chain (135 aa).

Belongs to the ATPase epsilon chain family. In terms of assembly, F-type ATPases have 2 components, CF(1) - the catalytic core - and CF(0) - the membrane proton channel. CF(1) has five subunits: alpha(3), beta(3), gamma(1), delta(1), epsilon(1). CF(0) has three main subunits: a, b and c.

Its subcellular location is the cell inner membrane. In terms of biological role, produces ATP from ADP in the presence of a proton gradient across the membrane. The polypeptide is ATP synthase epsilon chain (Rhodopseudomonas palustris (strain BisA53)).